A 258-amino-acid polypeptide reads, in one-letter code: 5'-nucleotidase SurE (258 aa).

Residues Asp-9, Asp-10, Ser-42, and Asn-96 each contribute to the a divalent metal cation site.

This sequence belongs to the SurE nucleotidase family. A divalent metal cation is required as a cofactor.

Its subcellular location is the cytoplasm. It carries out the reaction a ribonucleoside 5'-phosphate + H2O = a ribonucleoside + phosphate. In terms of biological role, nucleotidase that shows phosphatase activity on nucleoside 5'-monophosphates. This chain is 5'-nucleotidase SurE, found in Campylobacter jejuni subsp. jejuni serotype O:23/36 (strain 81-176).